A 271-amino-acid chain; its full sequence is Aquaporin-11 (271 aa).

Over 1–14 the chain is Cytoplasmic; that stretch reads MSALLGLRPEVQDT. Residues 15–35 traverse the membrane as a helical segment; the sequence is CISLGLMLLFVLFVGLARVIA. Residues 36–41 are Lumenal-facing; it reads RQQLHR. The chain crosses the membrane as a helical span at residues 42–62; that stretch reads PVVHAFVLEFLATFQLCCCTH. Residues 63-76 are Cytoplasmic-facing; that stretch reads ELQVLSEQDSAHPT. A helical membrane pass occupies residues 77-97; it reads WTLTLIYFFSLVHGLTLVGTA. Residues 98-166 are Lumenal-facing; the sequence is SNPCGVMMQM…NPIHTDMSKA (69 aa). The NPC signature appears at 99-101; that stretch reads NPC. A helical membrane pass occupies residues 167–187; it reads IIIEAICSFIFHSALLHFQEV. Residues 188-194 lie on the Cytoplasmic side of the membrane; sequence RTKLRIH. Residues 195 to 215 form a helical membrane-spanning segment; the sequence is LLAALITFLAYAGGSLTGALF. The NPA motif lies at 216 to 218; the sequence is NPA. The Lumenal portion of the chain corresponds to 216–234; the sequence is NPALALSLHFPCFDELFYK. A helical transmembrane segment spans residues 235-255; that stretch reads FFVVYWLAPSVGVLMMILMFS. Residues 256–271 are Cytoplasmic-facing; the sequence is FFLPWLHNNQMTNKKE.

This sequence belongs to the MIP/aquaporin (TC 1.A.8) family. AQP11/AQP12 subfamily. Homodimer; disulfide-linked. Homotetramer. Can also form homomultimer. In terms of processing, not glycosylated. Highly expressed in the S1 proximal tubule segment,. Expressed in the testis, kidney, and liver. Weakly expressed in the heart, brain, and muscle. Highly expressed in the testis. Expressed in the proximal tubule of the cortex of 8-day-old mouse kidney. Expressed in retina specifically at retinal Mueller glial cells. Expressed in brain. Expressed abundantly at the choroid plexus but also expressed weakly in the parenchyma. Expressed at the capillary endothelium in the cerebral white matter. Expressed in adult testis, in the elongated spermatids (ES) and in residual bodies inside Sertoli cells.

It localises to the endoplasmic reticulum membrane. The protein resides in the cytoplasmic vesicle membrane. Its subcellular location is the cell membrane. It carries out the reaction H2O(in) = H2O(out). The enzyme catalyses glycerol(in) = glycerol(out). The catalysed reaction is H2O2(out) = H2O2(in). Channel protein that facilitates the transport of water, glycerol and hydrogen peroxide across membrane of cell or organelles guaranteeing intracellular homeostasis in several organes like liver, kidney and brain. In situation of stress, participates in endoplasmic reticulum (ER) homeostasis by regulating redox homeostasis through the transport of hydrogen peroxide across the endoplasmic reticulum membrane thereby regulating the oxidative stress through the NADPH oxidase 2 pathway. Plays a role by maintaining an environment suitable for translation or protein foldings in the ER lumen namely by participating in the PKD1 glycosylation processing resulting in regulation of PKD1 membrane trafficking thereby preventing the accumulation of unfolding protein in ER. Plays a role in the proximal tubule function by regulating its endosomal acidification. May play a role in postnatal kidney development. The chain is Aquaporin-11 from Mus musculus (Mouse).